Reading from the N-terminus, the 375-residue chain is Transmembrane protein 183 (375 aa).

2 disordered regions span residues Met1–Arg21 and Leu94–Thr128. Residues Asp95–Ser106 are compositionally biased toward acidic residues. A helical transmembrane segment spans residues Leu299–Val319.

Belongs to the TMEM183 family.

The protein localises to the membrane. The protein is Transmembrane protein 183 (Tmem183) of Mus musculus (Mouse).